A 120-amino-acid chain; its full sequence is NAD(P)H-quinone oxidoreductase subunit 3, chloroplastic (120 aa).

3 helical membrane-spanning segments follow: residues 9–29, 64–84, and 88–108; these read IFWA…FISG, MFAL…PWAM, and VLGV…IVGL.

The protein belongs to the complex I subunit 3 family. NDH is composed of at least 16 different subunits, 5 of which are encoded in the nucleus.

The protein resides in the plastid. The protein localises to the chloroplast thylakoid membrane. It carries out the reaction a plastoquinone + NADH + (n+1) H(+)(in) = a plastoquinol + NAD(+) + n H(+)(out). It catalyses the reaction a plastoquinone + NADPH + (n+1) H(+)(in) = a plastoquinol + NADP(+) + n H(+)(out). Its function is as follows. NDH shuttles electrons from NAD(P)H:plastoquinone, via FMN and iron-sulfur (Fe-S) centers, to quinones in the photosynthetic chain and possibly in a chloroplast respiratory chain. The immediate electron acceptor for the enzyme in this species is believed to be plastoquinone. Couples the redox reaction to proton translocation, and thus conserves the redox energy in a proton gradient. This is NAD(P)H-quinone oxidoreductase subunit 3, chloroplastic from Panax ginseng (Korean ginseng).